Here is a 416-residue protein sequence, read N- to C-terminus: Serine hydroxymethyltransferase (416 aa).

Residues Leu-118 and 122 to 124 (GHL) contribute to the (6S)-5,6,7,8-tetrahydrofolate site. Lys-226 bears the N6-(pyridoxal phosphate)lysine mark. (6S)-5,6,7,8-tetrahydrofolate is bound by residues Glu-242 and 350–352 (SPF).

Belongs to the SHMT family. As to quaternary structure, homodimer. The cofactor is pyridoxal 5'-phosphate.

Its subcellular location is the cytoplasm. The enzyme catalyses (6R)-5,10-methylene-5,6,7,8-tetrahydrofolate + glycine + H2O = (6S)-5,6,7,8-tetrahydrofolate + L-serine. The protein operates within one-carbon metabolism; tetrahydrofolate interconversion. It participates in amino-acid biosynthesis; glycine biosynthesis; glycine from L-serine: step 1/1. In terms of biological role, catalyzes the reversible interconversion of serine and glycine with tetrahydrofolate (THF) serving as the one-carbon carrier. This reaction serves as the major source of one-carbon groups required for the biosynthesis of purines, thymidylate, methionine, and other important biomolecules. Also exhibits THF-independent aldolase activity toward beta-hydroxyamino acids, producing glycine and aldehydes, via a retro-aldol mechanism. The polypeptide is Serine hydroxymethyltransferase (Helicobacter pylori (strain G27)).